We begin with the raw amino-acid sequence, 293 residues long: Adenylyl-sulfate kinase 2, chloroplastic (293 aa).

A chloroplast-targeting transit peptide spans methionine 1 to serine 59. Residue glycine 122–threonine 130 coordinates ATP. Residues aspartate 152, arginine 155, arginine 169, asparagine 172, isoleucine 195–serine 196, and glycine 245 each bind substrate. Serine 196 serves as the catalytic Phosphoserine intermediate.

This sequence belongs to the APS kinase family. Interacts with APK1. As to expression, expressed in root vasculature, root tips, leaf epidermal cells and funiculus of developing seeds.

It is found in the plastid. Its subcellular location is the chloroplast. The enzyme catalyses adenosine 5'-phosphosulfate + ATP = 3'-phosphoadenylyl sulfate + ADP + H(+). It participates in sulfur metabolism; hydrogen sulfide biosynthesis; sulfite from sulfate: step 2/3. In terms of biological role, catalyzes the synthesis of activated sulfate. Essential for plant reproduction and viability. Required for the production of glucosinolates. This Arabidopsis thaliana (Mouse-ear cress) protein is Adenylyl-sulfate kinase 2, chloroplastic (APK2).